A 380-amino-acid polypeptide reads, in one-letter code: Cytochrome b (380 aa).

The next 4 helical transmembrane spans lie at 34–54, 78–99, 114–134, and 179–199; these read FGSLLAMCLMTQIITGLLLAT, WLIRNLHANGASFFFICIYLHI, WNTGVILLLTLMATAFVGYVL, and FFALHFLLPFIIAGITIIHLA. Heme b contacts are provided by His84 and His98. 2 residues coordinate heme b: His183 and His197. His202 is an a ubiquinone binding site. Transmembrane regions (helical) follow at residues 227 to 247, 289 to 309, 321 to 341, and 348 to 368; these read LKDILGLALMITPLLTLALFS, LGGVLALAASVLILLLIPFLH, LSQILFWLLAANLLILTWIGS, and FIIIGQLASFSYFTTILILFP.

This sequence belongs to the cytochrome b family. The cytochrome bc1 complex contains 11 subunits: 3 respiratory subunits (MT-CYB, CYC1 and UQCRFS1), 2 core proteins (UQCRC1 and UQCRC2) and 6 low-molecular weight proteins (UQCRH/QCR6, UQCRB/QCR7, UQCRQ/QCR8, UQCR10/QCR9, UQCR11/QCR10 and a cleavage product of UQCRFS1). This cytochrome bc1 complex then forms a dimer. It depends on heme b as a cofactor.

The protein resides in the mitochondrion inner membrane. In terms of biological role, component of the ubiquinol-cytochrome c reductase complex (complex III or cytochrome b-c1 complex) that is part of the mitochondrial respiratory chain. The b-c1 complex mediates electron transfer from ubiquinol to cytochrome c. Contributes to the generation of a proton gradient across the mitochondrial membrane that is then used for ATP synthesis. In Callipepla gambelii (Gambel's quail), this protein is Cytochrome b (MT-CYB).